Here is a 130-residue protein sequence, read N- to C-terminus: Small ribosomal subunit protein uS11c (130 aa).

Belongs to the universal ribosomal protein uS11 family. As to quaternary structure, part of the 30S ribosomal subunit.

The protein resides in the plastid. It is found in the chloroplast. The polypeptide is Small ribosomal subunit protein uS11c (Chlorella vulgaris (Green alga)).